The sequence spans 360 residues: MKATIIFFLVAQVSWAGPFQQKGLFDFMLEDEASGIGPEERFHEVPELEPMGPVCPFRCQCHLRVVQCSDLGLEKVPKDLPPDTALLDLQNNKITEIKDGDFKNLKNLHTLILINNKISKISPGAFAPLVKLERLYLSKNQLKELPEKMPKTLQELRVHENEITKVRKSVFNGLNQMIVVELGTNPLKSSGIENGAFQGMKKLSYIRIADTNITTIPQGLPPSLTELHLDGNKITKVDAASLKGLNNLAKLGLSFNSISAVDNGSLANTPHLRELHLNNNKLVKVPGGLADHKYIQVVYLHNNNISAIGSNDFCPPGYNTKKASYSGVSLFSNPVQYWEIQPSTFRCVYVRAAVQLGNYK.

Residues 1-16 form the signal peptide; that stretch reads MKATIIFFLVAQVSWA. Positions 17–30 are excised as a propeptide; sequence GPFQQKGLFDFMLE. S34 carries an O-linked (Xyl...) (glycosaminoglycan) serine glycan. Disulfide bonds link C55-C61 and C59-C68. LRR repeat units follow at residues 74–94, 95–118, 119–142, 143–163, 164–187, 188–213, 214–234, 235–258, 259–282, 283–305, 306–335, and 336–360; these read EKVPKDLPPDTALLDLQNNKI, TEIKDGDFKNLKNLHTLILINNKI, SKISPGAFAPLVKLERLYLSKNQL, KELPEKMPKTLQELRVHENEI, TKVRKSVFNGLNQMIVVELGTNPL, KSSGIENGAFQGMKKLSYIRIADTNI, TTIPQGLPPSLTELHLDGNKI, TKVDAASLKGLNNLAKLGLSFNSI, SAVDNGSLANTPHLRELHLNNNKL, VKVPGGLADHKYIQVVYLHNNNI, SAIGSNDFCPPGYNTKKASYSGVSLFSNPV, and QYWEIQPSTFRCVYVRAAVQLGNYK. N212 carries an N-linked (GlcNAc...) asparagine glycan. N-linked (GlcNAc...) asparagine glycans are attached at residues N263 and N304. C314 and C347 are disulfide-bonded.

Belongs to the small leucine-rich proteoglycan (SLRP) family. SLRP class I subfamily. Binds to type I and type II collagen, fibronectin and TGF-beta. Forms a ternary complex with MFAP2 and ELN. Interacts with DPT. Post-translationally, the attached glycosaminoglycan chain can be either chondroitin sulfate or dermatan sulfate depending upon the tissue of origin.

It localises to the secreted. The protein resides in the extracellular space. The protein localises to the extracellular matrix. Its function is as follows. May affect the rate of fibrils formation. This Ovis aries (Sheep) protein is Decorin (DCN).